Reading from the N-terminus, the 379-residue chain is MGVDLSDINDSLFKLSDKLSNDLAKQRNLCIVKEPSFSIEEHIKCFTTCINTYKPFSCLKHANWALLLAKKKSDTGLIGYCQSLRGLAYYLLEQYQSSAICFGFALKHLKKEDLTKWQVQLDSMLTIVHEQQNQDTSSLIPDECPNIPELEAAKIEGDEEFLNMSLKAPEGQIEKNEEKLSNRIRYDWSQTSFSLNIDIYAKKVKDEDVSLLMEKNTLKIEIKLEDGSIFSLVLDPLYEEIVPEKSSFKLFSSKVEITLIKKVSEIKWEALVKSPANNSVNVYAKDSNHSSASGNTKNKAKDWDSLAKLADLEEDEPTGEAALANLFQNLYKNADDDTRRAMMKSYTESNGTALSTNWKDVKSKTFETKPPQGMEPKKF.

The CS domain occupies 181-272; that stretch reads SNRIRYDWSQ…VSEIKWEALV (92 aa). The region spanning 292-379 is the SGS domain; sequence ASGNTKNKAK…PPQGMEPKKF (88 aa). Residues 345-379 form a disordered region; it reads SYTESNGTALSTNWKDVKSKTFETKPPQGMEPKKF. The segment covering 346 to 358 has biased composition (polar residues); that stretch reads YTESNGTALSTNW.

In terms of biological role, involved in cyclic AMP (cAMP) pathway, possibly by participating in the assembly or the conformational activation of specific multiprotein complexes. The chain is Glucose-insensitive transcription protein 7 (git7) from Schizosaccharomyces pombe (strain 972 / ATCC 24843) (Fission yeast).